Here is a 62-residue protein sequence, read N- to C-terminus: Conotoxin Sr5.6 (62 aa).

A signal peptide spans 1 to 22 (MRCLPVFVILLLLIASASSVDA). A propeptide spanning residues 23-44 (QLKTKDDVPLTSVHDNAKGTQH) is cleaved from the precursor. Proline 61 is subject to Proline amide.

It belongs to the conotoxin T superfamily. Contains 2 disulfide bonds that can be either 'C1-C3, C2-C4' or 'C1-C4, C2-C3', since these disulfide connectivities have been observed for conotoxins with cysteine framework V (for examples, see AC P0DQQ7 and AC P81755). As to expression, expressed by the venom duct.

The protein localises to the secreted. This Conus spurius (Alphabet cone) protein is Conotoxin Sr5.6.